A 410-amino-acid polypeptide reads, in one-letter code: E3 ubiquitin-protein ligase PRT1 (410 aa).

2 consecutive RING-type zinc fingers follow at residues 26-66 (CCVC…PICR) and 192-232 (CSAC…QECN). A ZZ-type zinc finger spans residues 306–370 (HFGAGCDSCG…RLELARSPQV (65 aa)). Positions 311, 314, 326, 329, 338, 341, 356, and 360 each coordinate Zn(2+). Residues 385–410 (ISNEGMDTDEGEEGPPGSSNESSSTE) form a disordered region. A compositionally biased stretch (low complexity) spans 399–410 (PPGSSNESSSTE).

The protein localises to the cytoplasm. The enzyme catalyses S-ubiquitinyl-[E2 ubiquitin-conjugating enzyme]-L-cysteine + [acceptor protein]-L-lysine = [E2 ubiquitin-conjugating enzyme]-L-cysteine + N(6)-ubiquitinyl-[acceptor protein]-L-lysine.. It functions in the pathway protein modification; protein ubiquitination. Its function is as follows. E3 ubiquitin-protein ligase that mediates ubiquitination and subsequent proteasomal degradation of target proteins. Functions in the N-end rule pathway of protein degradation, where it specifically recognizes and ubiquitinates proteins with a N-terminal bulky aromatic amino acid (Phe). Does not act on aliphatic hydrophobic and basic N-terminal residues (Arg or Leu) containing proteins. The polypeptide is E3 ubiquitin-protein ligase PRT1 (PRT1) (Arabidopsis thaliana (Mouse-ear cress)).